The chain runs to 482 residues: Auxin transporter-like protein 2 (482 aa).

The Cytoplasmic portion of the chain corresponds to 1 to 58 (MVPAGDQAEEAIVADAGKEEAEVRAAMGVEQDGKFSMTSLLWHGGSVWDAWFSCASNQ). The chain crosses the membrane as a helical span at residues 59 to 76 (VAQVLLTLPYSFSQLGML). The Extracellular portion of the chain corresponds to 77 to 78 (SG). The chain crosses the membrane as a helical span at residues 79-99 (LLLQVFYGLMGSWTAYLISVL). The Cytoplasmic portion of the chain corresponds to 100–134 (YVEYRARKEKEGVSFKNHVIQWFEVLDGLLGPYWK). A helical membrane pass occupies residues 135 to 155 (AAGLAFNCTFLLFGSVIQLIA). Residues 156 to 171 (CASNIYYINDRLDKRT) are Extracellular-facing. Residues 172–192 (WTYIFGACCSTTVFIPSFHNY) traverse the membrane as a helical segment. Position 193 (Arg-193) is a topological domain, cytoplasmic. The chain crosses the membrane as a helical span at residues 194 to 214 (IWSFLGLGMTTYTAWYLAIAA). The Extracellular portion of the chain corresponds to 215 to 231 (AVHGQVDGVTHSGPSKM). A helical membrane pass occupies residues 232–252 (VLYFTGATNILYTFGGHAVTV). The Cytoplasmic portion of the chain corresponds to 253 to 265 (EIMHAMWKPQKFK). Residues 266-286 (YIYLVATLYVFTLTLPSASAM) traverse the membrane as a helical segment. Residues 287–313 (YWAFGDALLTHSNAFSLLPRSGWRDAA) lie on the Extracellular side of the membrane. The chain crosses the membrane as a helical span at residues 314–334 (VILMLIHQFITFGFACTPLYF). The Cytoplasmic portion of the chain corresponds to 335–355 (VWEKAIGMHGTRSVLTRALAR). Residues 356–376 (LPIVVPIWFLAIIFPFFGPIN) traverse the membrane as a helical segment. Position 377 (Ser-377) is a topological domain, extracellular. A helical membrane pass occupies residues 378–398 (AVGALLVSFTVYIIPSLSHIL). Residues 399–423 (TYRSASARLNAAEKPPPFLPSWSGM) are Cytoplasmic-facing. Residues 424-444 (FVVNVFVVAWVLVVGFGLGGW) form a helical membrane-spanning segment. Residues 445 to 482 (ASVTNFIKQIDTFGLFAKCYQCPPRAHAGAPLPAPPRH) lie on the Extracellular side of the membrane.

Belongs to the amino acid/polyamine transporter 2 family. Amino acid/auxin permease (AAAP) (TC 2.A.18.1) subfamily.

The protein localises to the cell membrane. Carrier protein involved in proton-driven auxin influx. May mediate the formation of auxin gradient from developing leaves (site of auxin biosynthesis) to tips. This Oryza sativa subsp. japonica (Rice) protein is Auxin transporter-like protein 2.